A 2234-amino-acid polypeptide reads, in one-letter code: Bridge-like lipid transfer protein family member 2 (2234 aa).

An N-terminal signal peptide occupies residues 1 to 31 (MPLFLSALLVLLLVALSALFLGRWLVVRLAT). Positions 29–108 (LATRWCQRKL…LQKVSSLSAP (80 aa)) are transmembrane domain. At S563 the chain carries Phosphoserine. The segment at 1496-1529 (QMSAKKPKRGIPPSAQVPPHVSTPSFSGRPDKGS) is disordered. Positions 1814 to 1885 (ILHLQEAVRQ…LNILIRCFKD (72 aa)) form a coiled coil. Phosphoserine is present on residues S1846 and S2090.

Belongs to the SABRE family.

It is found in the cell membrane. Its subcellular location is the endoplasmic reticulum membrane. The protein localises to the mitochondrion membrane. Its function is as follows. Tube-forming lipid transport protein which binds to phosphatidylinositols and affects phosphatidylinositol-4,5-bisphosphate (PtdIns-4,5-P2) distribution. In Mus musculus (Mouse), this protein is Bridge-like lipid transfer protein family member 2 (Bltp2).